Consider the following 792-residue polypeptide: MSQIAVADLTEAQAAEELERLADDLAAHDLRYHQQDAPTISDAEYDALKRRNLDIEDRFPHLVRDNSPSMRVGAARAEQFSPVEHGVPMLSLDNAFSNDEATEFDARIRRFLRLTNEPVFYTAEPKIDGLSASLRYEKGVLVQGATRGDGRMGEDVTANLRTIADIPHRLRGGDPQGGGWPDVIEIRGEVYVELEAFAAFNAAALEAGQRTYANPRNFAAGSLRQIDPKISAQRPLRFFAYAWGLTSEGFAATQWEALGKLRDWGFVTTAPPAERVQDAQGLLDIYAKFEVERPKLAFDIDGVVYKVDDLEQQRRLGFVSRSPRWAIARKFPAQQARTILEAIDLQVGRTGAITPVARLKPVTVGGVSVTNATLHNADEIARKDVRIGDTVILQRAGDVIPQIVGPVLEERPAGAVPFEFPTHCPCHLETPLVRESTAAGAETVVRRCSGEFACPFQRIEHLRHFVSRRAFDIEGLGEKQLAAFFEEGWIKEPADIFKLARDEAKLAELRERDGYGETSVANLVKGIEARRTIGLDRVIYGLGMRDIGETTSTVLARNFASPKGKGGFEDLQAAAERAAGQLPGAVYLELAGAPGVGPKARDELVEAGKGGLKADPWPEADSLEVKIGHAVPKLSKPARVALAERYGDWDTFAQALAQAGQGAPGEDYLQLAAIDGIGPVAAQSIARFFAEAHNREKVANLIAELDIQPVAKPKTDTAVAGKTIVFTGALEKMTRDEAKAQAEGLGAKVASSVSKKTDLVVAGPGAGSKLKTATELGIQVMTEDEWLAMVGG.

Residues 42 to 46, 91 to 92, and Glu-124 each bind NAD(+); these read DAEYD and SL. The N6-AMP-lysine intermediate role is filled by Lys-126. NAD(+)-binding residues include Arg-147, Glu-189, Lys-306, and Lys-330. Residues Cys-424, Cys-426, Cys-448, and Cys-454 each coordinate Zn(2+). One can recognise a BRCT domain in the interval 714 to 792; sequence KTDTAVAGKT…EDEWLAMVGG (79 aa).

This sequence belongs to the NAD-dependent DNA ligase family. LigA subfamily. Mg(2+) is required as a cofactor. Requires Mn(2+) as cofactor.

It carries out the reaction NAD(+) + (deoxyribonucleotide)n-3'-hydroxyl + 5'-phospho-(deoxyribonucleotide)m = (deoxyribonucleotide)n+m + AMP + beta-nicotinamide D-nucleotide.. DNA ligase that catalyzes the formation of phosphodiester linkages between 5'-phosphoryl and 3'-hydroxyl groups in double-stranded DNA using NAD as a coenzyme and as the energy source for the reaction. It is essential for DNA replication and repair of damaged DNA. In Caulobacter sp. (strain K31), this protein is DNA ligase.